The primary structure comprises 235 residues: MKQPGEELQETLTELDDRAVVDYLIKNPEFFIRNARAVEAIRVPHPVRGTVSLVEWHMARARNHIHVLEENMALLMEQAIANEGLFYRLLYLQRSLTAASSLDDMLMRFHRWARDLGLAGASLRLFPDRWRLGAPSNHTHLALSRQSFEPLRIQRLGQEQHYLGPLNGPELLVVLPEAKAVGSVAMSMLGSDADLGVVLFTSRDASHYQQGQGTQLLHEIALMLPELLERWIERV.

This is an uncharacterized protein from Escherichia coli (strain K12).